Reading from the N-terminus, the 216-residue chain is Golgi to ER traffic protein 1 (216 aa).

Over 1 to 9 (MFDISSSNL) the chain is Lumenal. The chain crosses the membrane as a helical span at residues 10-29 (LISVLVVLFAKQLINAVGKA). Residues 30–116 (TLENIGWSAY…YISKYIGYMI (87 aa)) are Cytoplasmic-facing. Positions 54–105 (LDQKNVELAKVSKERKSISAQDQYARWTKLNRQFDKLTGEINKLKEETSASR) form a coiled coil. Residues 117-137 (LVTTTLPIWFFRVWFRKAVLF) form a helical membrane-spanning segment. Residues 138–161 (YFPTGVLPHYLEWFLALPFITTGG) lie on the Lumenal side of the membrane. A helical transmembrane segment spans residues 162–178 (VGLTIWMSAVNNVVSSV). Residues 179–216 (IFLVKFPFEKEVPFPSKEVGNEKTSINKEEVSGTPAAN) lie on the Cytoplasmic side of the membrane. The interval 193–216 (PSKEVGNEKTSINKEEVSGTPAAN) is disordered. The segment covering 197–209 (VGNEKTSINKEEV) has biased composition (basic and acidic residues).

Belongs to the WRB/GET1 family. In terms of assembly, component of the Golgi to ER traffic (GET) complex, which is composed of GET1, GET2 and GET3. Within the complex, GET1 and GET2 form a heterotetramer which is stabilized by phosphatidylinositol binding and which binds to the GET3 homodimer.

It is found in the endoplasmic reticulum membrane. The protein resides in the golgi apparatus membrane. In terms of biological role, required for the post-translational delivery of tail-anchored (TA) proteins to the endoplasmic reticulum. Together with GET2, acts as a membrane receptor for soluble GET3, which recognizes and selectively binds the transmembrane domain of TA proteins in the cytosol. The GET complex cooperates with the HDEL receptor ERD2 to mediate the ATP-dependent retrieval of resident ER proteins that contain a C-terminal H-D-E-L retention signal from the Golgi to the ER. The polypeptide is Golgi to ER traffic protein 1 (Debaryomyces hansenii (strain ATCC 36239 / CBS 767 / BCRC 21394 / JCM 1990 / NBRC 0083 / IGC 2968) (Yeast)).